Consider the following 338-residue polypeptide: Cytoskeleton protein RodZ (338 aa).

Over 1–111 (MNTEATHDQN…LGKRRKKRDG (111 aa)) the chain is Cytoplasmic. The HTH cro/C1-type domain occupies 19-71 (LRNAREQLGLSQQAVAERLCLKVSTVRDIEEDKAPADLASTFLRGYIRSYARL). A DNA-binding region (H-T-H motif) is located at residues 30 to 49 (QQAVAERLCLKVSTVRDIEE). The chain crosses the membrane as a helical; Signal-anchor for type II membrane protein span at residues 112–132 (WLMTFTWLVLFVVIGLSGAWW). Topologically, residues 133 to 338 (WQDHKAQQEE…TLNAEQSPAQ (206 aa)) are periplasmic. Over residues 155-169 (NANGTNSQSIPLENS) the composition is skewed to polar residues. The tract at residues 155–240 (NANGTNSQSI…TTPDTATPLP (86 aa)) is disordered. Over residues 170 to 188 (TTTVPEATPAPAAPVDTTA) the composition is skewed to low complexity. Over residues 203–217 (EPQQNAVVPPSQANV) the composition is skewed to polar residues. Residues 218–240 (DTATTAPAAPATTTTPDTATPLP) are compositionally biased toward low complexity.

The protein belongs to the RodZ family.

It is found in the cell inner membrane. Its function is as follows. Cytoskeletal protein that is involved in cell-shape control through regulation of the length of the long axis. This chain is Cytoskeleton protein RodZ, found in Escherichia fergusonii (strain ATCC 35469 / DSM 13698 / CCUG 18766 / IAM 14443 / JCM 21226 / LMG 7866 / NBRC 102419 / NCTC 12128 / CDC 0568-73).